The chain runs to 494 residues: UPF0371 protein SUB1165 (494 aa).

The protein belongs to the UPF0371 family.

The protein is UPF0371 protein SUB1165 of Streptococcus uberis (strain ATCC BAA-854 / 0140J).